Here is a 117-residue protein sequence, read N- to C-terminus: Large ribosomal subunit protein bL19 (117 aa).

It belongs to the bacterial ribosomal protein bL19 family.

This protein is located at the 30S-50S ribosomal subunit interface and may play a role in the structure and function of the aminoacyl-tRNA binding site. In Micrococcus luteus (strain ATCC 4698 / DSM 20030 / JCM 1464 / CCM 169 / CCUG 5858 / IAM 1056 / NBRC 3333 / NCIMB 9278 / NCTC 2665 / VKM Ac-2230) (Micrococcus lysodeikticus), this protein is Large ribosomal subunit protein bL19.